Consider the following 647-residue polypeptide: Epithelial sodium channel subunit beta (647 aa).

Residues 1–57 (MIHGKMKRLKRYFTRALHRIQKGPGYTYKELLVWFCDNTNTHGPKRIIKEGPKKRVM) lie on the Cytoplasmic side of the membrane. A helical transmembrane segment spans residues 58 to 78 (WFILTLVFAGLVFWQWGVLIL). The Extracellular segment spans residues 79-552 (TYLSYGVSVS…GGQFGFWMGG (474 aa)). 8 cysteine pairs are disulfide-bonded: Cys104-Cys291, Cys215-Cys222, Cys268-Cys275, Cys381-Cys468, Cys406-Cys464, Cys410-Cys460, Cys419-Cys446, and Cys421-Cys435. A helical transmembrane segment spans residues 553 to 573 (SVLCIIEFGEIIIDCMWITIL). Topologically, residues 574 to 647 (KFLAWSRNRR…AEPVSSDEEN (74 aa)) are cytoplasmic. Residues 586-647 (RKRPQYSDPP…AEPVSSDEEN (62 aa)) form a disordered region.

The protein belongs to the amiloride-sensitive sodium channel (TC 1.A.6) family. SCNN1B subfamily. Component of the heterotrimeric epithelial sodium channel (ENaC) composed of an alpha/SCNN1A, a beta/SCNN1B and a gamma/SCNN1G subunit.

The protein resides in the apical cell membrane. It localises to the cytoplasmic vesicle membrane. It carries out the reaction Na(+)(in) = Na(+)(out). Originally identified and characterized by its inhibition by the diuretic drug amiloride. Functionally, this is one of the three pore-forming subunits of the heterotrimeric epithelial sodium channel (ENaC), a critical regulator of sodium balance and fluid homeostasis. ENaC operates in epithelial tissues, where it mediates the electrodiffusion of sodium ions from extracellular fluid through the apical membrane of cells, with water following osmotically. The chain is Epithelial sodium channel subunit beta (scnn1b-a) from Xenopus laevis (African clawed frog).